Here is a 532-residue protein sequence, read N- to C-terminus: Carboxypeptidase Y (532 aa).

A signal peptide spans 1–20 (MKAFTSLLCGLGLSTTLAKA). A propeptide spans 21–111 (ISLQRPLGLD…AIENYQLRVN (91 aa)) (mediates translocation across the endoplasmic reticulum, renders the enzyme inactive during transit, and targets the molecule to the vacuole). The Vacuolar targeting signal motif lies at 24-27 (QRPL). 2 N-linked (GlcNAc...) (high mannose) asparagine glycosylation sites follow: asparagine 124 and asparagine 198. 5 disulfides stabilise this stretch: cysteine 167/cysteine 409, cysteine 304/cysteine 318, cysteine 328/cysteine 351, cysteine 335/cysteine 344, and cysteine 373/cysteine 379. Serine 257 is an active-site residue. N-linked (GlcNAc...) (high mannose) asparagine glycosylation occurs at asparagine 279. Aspartate 449 is an active-site residue. Substrate is bound at residue cysteine 452. The N-linked (GlcNAc...) (high mannose) asparagine glycan is linked to asparagine 479. Residue histidine 508 is part of the active site. Methionine 509 is a binding site for substrate.

The protein belongs to the peptidase S10 family. Post-translationally, enters the endoplasmic reticulum as an inactive zymogen and is modified by four N-linked core oligosaccharides, giving rise to a precursor known as P1 (67 kDa). As P1 transits through the Golgi, extension of its core oligosaccharides leads to the Golgi-modified P2 precursor (69 kDa). P2 is sorted away from secretory proteins at or beyond a late Golgi compartment and is subsequently delivered to the vacuole via a prevacuolar endosome-like compartment. Upon arrival in the vacuole, the N-terminal prosegment of P2 is cleaved by vacuolar proteases to yield the enzymatically active mature vacuolar form of CPY (61 kDa). The four high mannose core N-glycans found in mature CPY are Man(11-15)GlcNAc(2) at Asn-124, Man(8-12)GlcNAc(2) at Asn-198, Man(9-14)GlcNAc(2) at Asn-279 and phosphorylated Man(12-17)GlcNAc(2) as well as Man(11-16)GlcNAc(2) at Asn-479.

The protein resides in the vacuole lumen. It carries out the reaction Release of a C-terminal amino acid with broad specificity.. With respect to regulation, inhibited by ZPCK. In terms of biological role, vacuolar serine-type carboxypeptidase involved in degradation of small peptides. Digests preferentially peptides containing an aliphatic or hydrophobic residue in P1' position, as well as methionine, leucine or phenylalanine in P1 position of ester substrate. Also plays a role in breakdown of the autophagic body and the autophagosome-dependent protein synthesis. Plays a key role in phytochelatin (PC) synthesis from glutathione (GSH) by cleaving the Gly from GSH and form the PC-peptides of the structure (gamma-Glu-Cys)2-Gly. Also involved in resistance to xenobiotics via the degradation of glutathione-S-conjugates. This chain is Carboxypeptidase Y, found in Saccharomyces cerevisiae (strain ATCC 204508 / S288c) (Baker's yeast).